The chain runs to 734 residues: Ribosome-releasing factor 2, mitochondrial (734 aa).

A mitochondrion-targeting transit peptide spans 1 to 25 (MLQYCLLRRYRFLLRQHAQVIKRCY). The 277-residue stretch at 27–303 (GDIRNIGILA…AVNAYLPMPE (277 aa)) folds into the tr-type G domain. GTP-binding positions include 36-43 (AHIDAGKT), 100-104 (DTPGH), and 154-157 (NKMD).

It belongs to the TRAFAC class translation factor GTPase superfamily. Classic translation factor GTPase family. EF-G/EF-2 subfamily.

Its subcellular location is the mitochondrion. Its function is as follows. Mitochondrial GTPase that mediates the disassembly of ribosomes from messenger RNA at the termination of mitochondrial protein biosynthesis. Not involved in the GTP-dependent ribosomal translocation step during translation elongation. The sequence is that of Ribosome-releasing factor 2, mitochondrial from Drosophila grimshawi (Hawaiian fruit fly).